The chain runs to 316 residues: Probable protein-L-isoaspartate O-methyltransferase (316 aa).

Residues 103 to 106 (ATIS), His111, Ser136, 157 to 158 (EH), 187 to 188 (DG), Thr263, and Gln268 contribute to the S-adenosyl-L-homocysteine site. Ser106 is an active-site residue.

This sequence belongs to the methyltransferase superfamily. L-isoaspartyl/D-aspartyl protein methyltransferase family.

The protein localises to the cytoplasm. Its subcellular location is the cytosol. The enzyme catalyses [protein]-L-isoaspartate + S-adenosyl-L-methionine = [protein]-L-isoaspartate alpha-methyl ester + S-adenosyl-L-homocysteine. Initiates the repair of damaged proteins by catalyzing methyl esterification of L-isoaspartyl and D-aspartyl residues produced by spontaneous isomerization and racemization of L-aspartyl and L-asparaginyl residues in aging peptides and proteins. The sequence is that of Probable protein-L-isoaspartate O-methyltransferase (pcmA) from Dictyostelium discoideum (Social amoeba).